The chain runs to 366 residues: Beta sliding clamp (366 aa).

This sequence belongs to the beta sliding clamp family. Forms a ring-shaped head-to-tail homodimer around DNA which binds and tethers DNA polymerases and other proteins to the DNA. The DNA replisome complex has a single clamp-loading complex (3 tau and 1 each of delta, delta', psi and chi subunits) which binds 3 Pol III cores (1 core on the leading strand and 2 on the lagging strand) each with a beta sliding clamp dimer. Additional proteins in the replisome are other copies of gamma, psi and chi, Ssb, DNA helicase and RNA primase.

It localises to the cytoplasm. Its function is as follows. Confers DNA tethering and processivity to DNA polymerases and other proteins. Acts as a clamp, forming a ring around DNA (a reaction catalyzed by the clamp-loading complex) which diffuses in an ATP-independent manner freely and bidirectionally along dsDNA. Initially characterized for its ability to contact the catalytic subunit of DNA polymerase III (Pol III), a complex, multichain enzyme responsible for most of the replicative synthesis in bacteria; Pol III exhibits 3'-5' exonuclease proofreading activity. The beta chain is required for initiation of replication as well as for processivity of DNA replication. In Salmonella typhimurium (strain LT2 / SGSC1412 / ATCC 700720), this protein is Beta sliding clamp (dnaN).